The chain runs to 362 residues: MAFKRKTRWLWQVLILSVGLNMLFLLLFYSAIFRKDIYKLHLFSGPLIAKSSRKVYLSEDFLNEISQASLDDLISLFKDERYMYGRPIKLWALSVAIASHHIDITPVLSKPLTYTELKGSSVRWLLPNIDLKDFPVILDYLRCHKYPYTSKGLFLLIEKMVQEGWVDEDCLYHFCSTPEFLYLRTLLVGADVQASSVASLARMVIRCGSERFFHFCNEESRTSMISATQRQKVLKSYLDCEESLAALLLLVHDSDVVLHEFCDEDLEKVIRLMPQESPYSQNFFSRLQHSPRRELACMSTQRVEAPRVQEDQDEEYVVQDGDSLWLIAKRFGIPMDKIIQKNGLNHHRLFPGKVLKLPAKQS.

Residues valine 13–phenylalanine 33 form a helical membrane-spanning segment. The 44-residue stretch at glutamate 314–leucine 357 folds into the LysM domain.

It belongs to the chlamydial CPn_0593/CT_474/TC_0759 family.

The protein localises to the membrane. This is an uncharacterized protein from Chlamydia pneumoniae (Chlamydophila pneumoniae).